The chain runs to 154 residues: Myoglobin (154 aa).

The Globin domain maps to 2-148 (GLSDQEWQQV…FRNDMASKYK (147 aa)). H65 serves as a coordination point for nitrite. H65 provides a ligand contact to O2. Position 94 (H94) interacts with heme b.

The protein belongs to the globin family. Monomeric.

Its subcellular location is the cytoplasm. It is found in the sarcoplasm. The enzyme catalyses Fe(III)-heme b-[protein] + nitric oxide + H2O = Fe(II)-heme b-[protein] + nitrite + 2 H(+). It catalyses the reaction H2O2 + AH2 = A + 2 H2O. Its function is as follows. Monomeric heme protein which primary function is to store oxygen and facilitate its diffusion within muscle tissues. Reversibly binds oxygen through a pentacoordinated heme iron and enables its timely and efficient release as needed during periods of heightened demand. Depending on the oxidative conditions of tissues and cells, and in addition to its ability to bind oxygen, it also has a nitrite reductase activity whereby it regulates the production of bioactive nitric oxide. Under stress conditions, like hypoxia and anoxia, it also protects cells against reactive oxygen species thanks to its pseudoperoxidase activity. This Aethia pygmaea (Whiskered auklet) protein is Myoglobin (MB).